Here is a 401-residue protein sequence, read N- to C-terminus: Nicotinate phosphoribosyltransferase (401 aa).

H221 is modified (phosphohistidine; by autocatalysis).

This sequence belongs to the NAPRTase family. Post-translationally, transiently phosphorylated on a His residue during the reaction cycle. Phosphorylation strongly increases the affinity for substrates and increases the rate of nicotinate D-ribonucleotide production. Dephosphorylation regenerates the low-affinity form of the enzyme, leading to product release.

It catalyses the reaction nicotinate + 5-phospho-alpha-D-ribose 1-diphosphate + ATP + H2O = nicotinate beta-D-ribonucleotide + ADP + phosphate + diphosphate. The protein operates within cofactor biosynthesis; NAD(+) biosynthesis; nicotinate D-ribonucleotide from nicotinate: step 1/1. Catalyzes the synthesis of beta-nicotinate D-ribonucleotide from nicotinate and 5-phospho-D-ribose 1-phosphate at the expense of ATP. The chain is Nicotinate phosphoribosyltransferase from Yersinia enterocolitica serotype O:8 / biotype 1B (strain NCTC 13174 / 8081).